Reading from the N-terminus, the 110-residue chain is Thiosulfate sulfurtransferase GlpE (110 aa).

One can recognise a Rhodanese domain in the interval 19–107; it reads EDSLAVLVDI…WRRQALPIIQ (89 aa). The active-site Cysteine persulfide intermediate is the Cys-67.

The protein belongs to the GlpE family.

The protein localises to the cytoplasm. It catalyses the reaction thiosulfate + hydrogen cyanide = thiocyanate + sulfite + 2 H(+). It carries out the reaction thiosulfate + [thioredoxin]-dithiol = [thioredoxin]-disulfide + hydrogen sulfide + sulfite + 2 H(+). Transferase that catalyzes the transfer of sulfur from thiosulfate to thiophilic acceptors such as cyanide or dithiols. May function in a CysM-independent thiosulfate assimilation pathway by catalyzing the conversion of thiosulfate to sulfite, which can then be used for L-cysteine biosynthesis. In Photobacterium profundum (strain SS9), this protein is Thiosulfate sulfurtransferase GlpE.